The chain runs to 396 residues: Phosphoglycerate kinase (396 aa).

Substrate is bound by residues 21-23, Arg36, 59-62, Arg113, and Arg146; these read DLN and HLGR. ATP is bound by residues Lys197, Glu319, and 345-348; that span reads GGDT.

The protein belongs to the phosphoglycerate kinase family. In terms of assembly, monomer.

Its subcellular location is the cytoplasm. It catalyses the reaction (2R)-3-phosphoglycerate + ATP = (2R)-3-phospho-glyceroyl phosphate + ADP. The protein operates within carbohydrate degradation; glycolysis; pyruvate from D-glyceraldehyde 3-phosphate: step 2/5. The sequence is that of Phosphoglycerate kinase from Legionella pneumophila (strain Lens).